The primary structure comprises 438 residues: Putative pectate lyase 14 (438 aa).

A signal peptide spans 1–26 (MVVARTLFSISATLIIFLALFLHVNA). N-linked (GlcNAc...) asparagine glycosylation is found at N40, N46, and N73. 3 residues coordinate Ca(2+): D236, D260, and D264. R316 is a catalytic residue.

This sequence belongs to the polysaccharide lyase 1 family. Ca(2+) is required as a cofactor.

The catalysed reaction is Eliminative cleavage of (1-&gt;4)-alpha-D-galacturonan to give oligosaccharides with 4-deoxy-alpha-D-galact-4-enuronosyl groups at their non-reducing ends.. It functions in the pathway glycan metabolism; pectin degradation; 2-dehydro-3-deoxy-D-gluconate from pectin: step 2/5. This chain is Putative pectate lyase 14, found in Arabidopsis thaliana (Mouse-ear cress).